We begin with the raw amino-acid sequence, 75 residues long: Kappa-conotoxin RIIIK (75 aa).

Positions 1 to 19 are cleaved as a signal peptide; the sequence is MSKLGVLLTICLLLFPLTA. Positions 20–50 are excised as a propeptide; the sequence is LPMDGDQPVDRLAERMQDNISSEQHTFFEKR. Residues P52, P63, P65, and P71 each carry the 4-hydroxyproline modification. 3 cysteine pairs are disulfide-bonded: C54–C67, C55–C72, and C62–C73. T74 carries the threonine amide modification.

This sequence belongs to the conotoxin M superfamily. Expressed by the venom duct.

The protein resides in the secreted. Its function is as follows. Kappa-conotoxins inhibits voltage-gated potassium channels (Kv). This synthetic toxin reversibly inhibits the insect potassium channel Shaker K+, the teleost homolog TSha1 and the mammalian Kv1.2/KCNA2 channel. Interacts with the pore region of the insect channel, in a state-dependent manner. Causes seizure when intracerebrovascularly injected into mice. Is also toxic when intrathecally injected into mice, but shows no visible effects by intraperitoneal injection. Shows protective effects on cardiac tissue when administered after an ischemic event. This is Kappa-conotoxin RIIIK from Conus radiatus (Rayed cone).